The following is a 396-amino-acid chain: MSQLKLNPYFGEYGGMYVPQILVPALKQLESAFVEAQTDESFQAEFTDLLKNYAGRPTALTLTRNLSPNPMVKIYLKREDLLHGGAHKTNQVLGQALLAKRMGKKEIIAETGAGQHGVATALACALLGLKCKVYMGAKDVARQSPNVFRMRLMGAEVIPVTSGSATLKDACNEAMRDWSGSYEKAHYLLGTAAGPHPFPTIVREFQRIIGEETKKQILEREGRLPDAVIACVGGGSNAIGMFADFIDETNVELIGVEPAGKGIDTHMHGAPLKHGKTGIFFGMKAPLMQDSEGQIEESYSISAGLDFPSVGPQHAHLNAIGRARYESATDDEALEAFQLLARCEGIIPALESAHALAYALRLAKECTKETILVVNLSGRGDKDIFTVSDILNGKEE.

Residue K88 is modified to N6-(pyridoxal phosphate)lysine.

The protein belongs to the TrpB family. As to quaternary structure, tetramer of two alpha and two beta chains. Pyridoxal 5'-phosphate is required as a cofactor.

The catalysed reaction is (1S,2R)-1-C-(indol-3-yl)glycerol 3-phosphate + L-serine = D-glyceraldehyde 3-phosphate + L-tryptophan + H2O. The protein operates within amino-acid biosynthesis; L-tryptophan biosynthesis; L-tryptophan from chorismate: step 5/5. Functionally, the beta subunit is responsible for the synthesis of L-tryptophan from indole and L-serine. This Shewanella oneidensis (strain ATCC 700550 / JCM 31522 / CIP 106686 / LMG 19005 / NCIMB 14063 / MR-1) protein is Tryptophan synthase beta chain.